We begin with the raw amino-acid sequence, 224 residues long: Octanoyltransferase (224 aa).

The BPL/LPL catalytic domain occupies 33–213; that stretch reads GTTAETMLLL…ALQAEFGREA (181 aa). Residues 51-71 are disordered; that stretch reads GKRTTDDERPTDGTPVVDVDR. Residues 71–78, 143–145, and 156–158 each bind substrate; these read RGGKITWH, AIG, and GFA. Cys-174 functions as the Acyl-thioester intermediate in the catalytic mechanism.

This sequence belongs to the LipB family.

Its subcellular location is the cytoplasm. The enzyme catalyses octanoyl-[ACP] + L-lysyl-[protein] = N(6)-octanoyl-L-lysyl-[protein] + holo-[ACP] + H(+). The protein operates within protein modification; protein lipoylation via endogenous pathway; protein N(6)-(lipoyl)lysine from octanoyl-[acyl-carrier-protein]: step 1/2. Catalyzes the transfer of endogenously produced octanoic acid from octanoyl-acyl-carrier-protein onto the lipoyl domains of lipoate-dependent enzymes. Lipoyl-ACP can also act as a substrate although octanoyl-ACP is likely to be the physiological substrate. In Leifsonia xyli subsp. xyli (strain CTCB07), this protein is Octanoyltransferase.